A 559-amino-acid polypeptide reads, in one-letter code: Podocan-like protein 1 (559 aa).

The N-terminal stretch at 1–20 (MRPQELLLLLLMLKWSLAHT) is a signal peptide. Asparagine 64 carries an N-linked (GlcNAc...) asparagine glycan. LRR repeat units lie at residues 66–89 (TRAA…ELSR), 90–115 (LSGL…AFES), 117–139 (NQLE…LPRS), 140–160 (LRVA…TFGE), 161–186 (KPAL…TFHG), 188–208 (EVIT…PSLP), 209–231 (ASLE…ALSL), 233–257 (THLR…TFSK), 258–281 (LSSL…LPGT), 283–302 (TILH…RLHK), 303–328 (ARGL…TLRP), 329–352 (LRAL…LPRH), 354–373 (QALV…DLVS), 374–399 (ARAL…AFRR), 400–423 (LRAL…LPAS), 425–444 (RSLR…QLAG), 445–470 (LNKL…TWHE), 471–494 (LQAL…LPEA), 496–515 (EELY…AFLS), and 517–541 (PHLR…ALQG).

The protein belongs to the small leucine-rich proteoglycan (SLRP) family. SLRP class V subfamily. N-glycosylated. In terms of tissue distribution, detected in bone where it is expressed in osteoblasts and newly formed bone matrix (at protein level). Also expressed weakly in osteoclasts (at protein level). Expressed strongly in calvaria, lung and femur, and weakly in kidney.

The protein localises to the secreted. The protein resides in the extracellular space. It is found in the extracellular matrix. This chain is Podocan-like protein 1, found in Mus musculus (Mouse).